Consider the following 2352-residue polypeptide: Ectopic P granules protein 5 (2352 aa).

Disordered stretches follow at residues 1–112 (MAEL…IFPR) and 1315–1335 (KNRE…SSAK). Basic and acidic residues predominate over residues 66-81 (DSLKREEASEPLKDVR).

Belongs to the EPG5 family. In terms of tissue distribution, expressed in pharyngeal and body wall muscles and intestine cells.

Its subcellular location is the cytoplasm. It is found in the cytoplasmic vesicle. The protein resides in the phagosome membrane. Involved in the maturation of autophagosomes into autolysosomes during starvation-induced autotrophy. Specifically, involved in the clearance of apoptotic cells by promoting the delivery of engulfed apoptotic cells to the lysosome. In Caenorhabditis elegans, this protein is Ectopic P granules protein 5.